Consider the following 396-residue polypeptide: Acetate kinase (396 aa).

Asn-8 contacts Mg(2+). ATP is bound at residue Lys-15. Substrate is bound at residue Arg-89. Residue Asp-146 is the Proton donor/acceptor of the active site. Residues 206 to 210, 283 to 285, and 331 to 335 contribute to the ATP site; these read HIGNG, DMR, and GIGEN. Glu-383 contributes to the Mg(2+) binding site.

The protein belongs to the acetokinase family. In terms of assembly, homodimer. Requires Mg(2+) as cofactor. The cofactor is Mn(2+).

It localises to the cytoplasm. The catalysed reaction is acetate + ATP = acetyl phosphate + ADP. Its pathway is metabolic intermediate biosynthesis; acetyl-CoA biosynthesis; acetyl-CoA from acetate: step 1/2. Catalyzes the formation of acetyl phosphate from acetate and ATP. Can also catalyze the reverse reaction. This Streptococcus gordonii (strain Challis / ATCC 35105 / BCRC 15272 / CH1 / DL1 / V288) protein is Acetate kinase.